Reading from the N-terminus, the 233-residue chain is UPF0173 metal-dependent hydrolase Acid345_3437 (233 aa).

Belongs to the UPF0173 family.

The polypeptide is UPF0173 metal-dependent hydrolase Acid345_3437 (Koribacter versatilis (strain Ellin345)).